The chain runs to 170 residues: Cathelicidin antimicrobial peptide (170 aa).

The N-terminal stretch at M1–A30 is a signal peptide. A propeptide spans Q31–R131 (cathelin-like domain (CLD)). Intrachain disulfides connect C86-C97 and C108-C125. The segment at L150–G162 is active core.

Belongs to the cathelicidin family. Monomer, homodimer or homotrimer (in vitro). Oligomerizes as tetra- or hexamer in solution (in vitro). Post-translationally, proteolytically cleaved by proteinase PRTN3 into antibacterial peptide LL-37. Proteolytically cleaved by cathepsin CTSG and neutrophil elastase ELANE. Resistant to proteolytic degradation in solution, and when bound to both zwitterionic (mimicking mammalian membranes) and negatively charged membranes (mimicking bacterial membranes). In terms of processing, after secretion onto the skin surface, the CAMP gene product is processed by a serine protease-dependent mechanism into multiple novel antimicrobial peptides distinct from and shorter than cathelicidin LL-37. These peptides show enhanced antimicrobial action, acquiring the ability to kill skin pathogens such as S.aureus, E.coli and C.albicans. These peptides have lost the ability to stimulate CXCL8/IL8 release from keratinocytes. The peptides act synergistically, killing bacteria at lower concentrations when present together, and maintain activity at increased salt condition.

It localises to the secreted. It is found in the vesicle. Antimicrobial protein that is an integral component of the innate immune system. Binds to bacterial lipopolysaccharides (LPS). Acts via neutrophil N-formyl peptide receptors to enhance the release of CXCL2. Postsecretory processing generates multiple cathelicidin antimicrobial peptides with various lengths which act as a topical antimicrobial defense in sweat on skin. The unprocessed precursor form, cathelicidin antimicrobial peptide, inhibits the growth of Gram-negative E.coli and E.aerogenes with efficiencies comparable to that of the mature peptide LL-37 (in vitro). Its function is as follows. Antimicrobial peptide that is an integral component of the innate immune system. Binds to bacterial lipopolysaccharides (LPS). Causes membrane permeabilization by forming transmembrane pores (in vitro). Causes lysis of E.coli. Exhibits antimicrobial activity against Gram-negative bacteria such as P.aeruginosa, S.typhimurium, E.aerogenes, E.coli and P.syringae, Gram-positive bacteria such as L.monocytogenes, S.epidermidis, S.pyogenes and S.aureus, as well as vancomycin-resistant enterococci (in vitro). Exhibits antimicrobial activity against methicillin-resistant S.aureus, P.mirabilis, and C.albicans in low-salt media, but not in media containing 100 mM NaCl (in vitro). Forms chiral supramolecular assemblies with quinolone signal (PQS) molecules of P.aeruginosa, which may lead to interference of bacterial quorum signaling and perturbance of bacterial biofilm formation. May form supramolecular fiber-like assemblies on bacterial membranes. Induces cytokine and chemokine producation as well as TNF/TNFA and CSF2/GMCSF production in normal human keratinocytes. Exhibits hemolytic activity against red blood cells. In terms of biological role, exhibits antimicrobial activity against E.coli and B.megaterium (in vitro). This chain is Cathelicidin antimicrobial peptide, found in Macaca fascicularis (Crab-eating macaque).